The following is a 346-amino-acid chain: N-acetyl-gamma-glutamyl-phosphate reductase (346 aa).

Residue Cys-149 is part of the active site.

The protein belongs to the NAGSA dehydrogenase family. Type 1 subfamily.

Its subcellular location is the cytoplasm. The catalysed reaction is N-acetyl-L-glutamate 5-semialdehyde + phosphate + NADP(+) = N-acetyl-L-glutamyl 5-phosphate + NADPH + H(+). It participates in amino-acid biosynthesis; L-arginine biosynthesis; N(2)-acetyl-L-ornithine from L-glutamate: step 3/4. Its function is as follows. Catalyzes the NADPH-dependent reduction of N-acetyl-5-glutamyl phosphate to yield N-acetyl-L-glutamate 5-semialdehyde. This Geobacter sulfurreducens (strain ATCC 51573 / DSM 12127 / PCA) protein is N-acetyl-gamma-glutamyl-phosphate reductase.